Consider the following 415-residue polypeptide: Dynein assembly factor with WD repeat domains 1 (415 aa).

WD repeat units lie at residues 90–129 (AHIL…ELNT), 132–174 (GHRN…HTFR), 175–214 (GHTA…EVYT), 217–256 (GHSA…KVNI), 259–298 (GHCA…CVAT), 301–340 (GHDD…CIAK), 343–384 (GHEG…QVLE), and 386–415 (HTDE…RIWR).

This sequence belongs to the WD repeat WDR69 family. Interacts with IFT46.

It is found in the cytoplasm. The protein resides in the cytoskeleton. The protein localises to the flagellum basal body. It localises to the flagellum axoneme. Its function is as follows. Required for axonemal dynein assembly and ciliary motility in ciliated organs, including Kupffer's vesicle, during embryogenesis. Facilitates the onset of robust cilia motility during development. This Homo sapiens (Human) protein is Dynein assembly factor with WD repeat domains 1.